Consider the following 126-residue polypeptide: Small ribosomal subunit protein uS13 (126 aa).

The interval R94–K126 is disordered. Residues R108–K126 are compositionally biased toward basic residues.

It belongs to the universal ribosomal protein uS13 family. In terms of assembly, part of the 30S ribosomal subunit. Forms a loose heterodimer with protein S19. Forms two bridges to the 50S subunit in the 70S ribosome.

Its function is as follows. Located at the top of the head of the 30S subunit, it contacts several helices of the 16S rRNA. In the 70S ribosome it contacts the 23S rRNA (bridge B1a) and protein L5 of the 50S subunit (bridge B1b), connecting the 2 subunits; these bridges are implicated in subunit movement. Contacts the tRNAs in the A and P-sites. This is Small ribosomal subunit protein uS13 from Streptomyces avermitilis (strain ATCC 31267 / DSM 46492 / JCM 5070 / NBRC 14893 / NCIMB 12804 / NRRL 8165 / MA-4680).